The primary structure comprises 354 residues: Biotin synthase (354 aa).

Positions 41–268 constitute a Radical SAM core domain; the sequence is NEVQISRLLS…LSRVRLSAGR (228 aa). Positions 56, 60, and 63 each coordinate [4Fe-4S] cluster. Residues Cys100, Cys131, Cys191, and Arg263 each coordinate [2Fe-2S] cluster.

The protein belongs to the radical SAM superfamily. Biotin synthase family. As to quaternary structure, homodimer. [4Fe-4S] cluster is required as a cofactor. The cofactor is [2Fe-2S] cluster.

The enzyme catalyses (4R,5S)-dethiobiotin + (sulfur carrier)-SH + 2 reduced [2Fe-2S]-[ferredoxin] + 2 S-adenosyl-L-methionine = (sulfur carrier)-H + biotin + 2 5'-deoxyadenosine + 2 L-methionine + 2 oxidized [2Fe-2S]-[ferredoxin]. Its pathway is cofactor biosynthesis; biotin biosynthesis; biotin from 7,8-diaminononanoate: step 2/2. Catalyzes the conversion of dethiobiotin (DTB) to biotin by the insertion of a sulfur atom into dethiobiotin via a radical-based mechanism. The polypeptide is Biotin synthase (Shewanella amazonensis (strain ATCC BAA-1098 / SB2B)).